The sequence spans 212 residues: Thiamine-phosphate synthase (212 aa).

Residues 35–39 (QLRDK) and Asn-67 each bind 4-amino-2-methyl-5-(diphosphooxymethyl)pyrimidine. Asp-68 and Asp-87 together coordinate Mg(2+). Residue Ser-106 coordinates 4-amino-2-methyl-5-(diphosphooxymethyl)pyrimidine. 2-[(2R,5Z)-2-carboxy-4-methylthiazol-5(2H)-ylidene]ethyl phosphate is bound at residue 132–134 (TGS). Lys-135 lines the 4-amino-2-methyl-5-(diphosphooxymethyl)pyrimidine pocket. 2-[(2R,5Z)-2-carboxy-4-methylthiazol-5(2H)-ylidene]ethyl phosphate-binding positions include Gly-163 and 183–184 (IS).

Belongs to the thiamine-phosphate synthase family. It depends on Mg(2+) as a cofactor.

It catalyses the reaction 2-[(2R,5Z)-2-carboxy-4-methylthiazol-5(2H)-ylidene]ethyl phosphate + 4-amino-2-methyl-5-(diphosphooxymethyl)pyrimidine + 2 H(+) = thiamine phosphate + CO2 + diphosphate. The catalysed reaction is 2-(2-carboxy-4-methylthiazol-5-yl)ethyl phosphate + 4-amino-2-methyl-5-(diphosphooxymethyl)pyrimidine + 2 H(+) = thiamine phosphate + CO2 + diphosphate. It carries out the reaction 4-methyl-5-(2-phosphooxyethyl)-thiazole + 4-amino-2-methyl-5-(diphosphooxymethyl)pyrimidine + H(+) = thiamine phosphate + diphosphate. It functions in the pathway cofactor biosynthesis; thiamine diphosphate biosynthesis; thiamine phosphate from 4-amino-2-methyl-5-diphosphomethylpyrimidine and 4-methyl-5-(2-phosphoethyl)-thiazole: step 1/1. Its function is as follows. Condenses 4-methyl-5-(beta-hydroxyethyl)thiazole monophosphate (THZ-P) and 2-methyl-4-amino-5-hydroxymethyl pyrimidine pyrophosphate (HMP-PP) to form thiamine monophosphate (TMP). The protein is Thiamine-phosphate synthase of Methanocella arvoryzae (strain DSM 22066 / NBRC 105507 / MRE50).